A 115-amino-acid polypeptide reads, in one-letter code: Peptidyl-tRNA hydrolase (115 aa).

This sequence belongs to the PTH2 family.

The protein resides in the cytoplasm. It carries out the reaction an N-acyl-L-alpha-aminoacyl-tRNA + H2O = an N-acyl-L-amino acid + a tRNA + H(+). Its function is as follows. The natural substrate for this enzyme may be peptidyl-tRNAs which drop off the ribosome during protein synthesis. In Nanoarchaeum equitans (strain Kin4-M), this protein is Peptidyl-tRNA hydrolase (pth).